A 231-amino-acid polypeptide reads, in one-letter code: Lipoprotein-releasing system ATP-binding protein LolD (231 aa).

An ABC transporter domain is found at 6 to 230 (LSCKNVSKKY…DGELELVINS (225 aa)). 42–49 (GLSGSGKT) lines the ATP pocket.

The protein belongs to the ABC transporter superfamily. Lipoprotein translocase (TC 3.A.1.125) family. As to quaternary structure, the complex is composed of two ATP-binding proteins (LolD) and two transmembrane proteins (LolC and LolE).

The protein localises to the cell inner membrane. Functionally, part of the ABC transporter complex LolCDE involved in the translocation of mature outer membrane-directed lipoproteins, from the inner membrane to the periplasmic chaperone, LolA. Responsible for the formation of the LolA-lipoprotein complex in an ATP-dependent manner. This chain is Lipoprotein-releasing system ATP-binding protein LolD, found in Francisella tularensis subsp. tularensis (strain FSC 198).